Consider the following 386-residue polypeptide: F420 non-reducing hydrogenase I small subunit (386 aa).

Positions 1-51 (MVEMSTGTTNLVRTLDSMDFLKMDRRTFMKAVSALGATAFLGTYQTEIVNA) form a signal peptide, tat-type signal. [4Fe-4S] cluster is bound by residues C67, C70, C178, C227, H273, C276, C296, and C302. [3Fe-4S] cluster contacts are provided by C311, C330, and C333.

This sequence belongs to the [NiFe]/[NiFeSe] hydrogenase small subunit family. Composed of a large subunit (VhoA), a small subunit (VhoG) and a cytochrome subunit (VhoC). [4Fe-4S] cluster serves as cofactor. [3Fe-4S] cluster is required as a cofactor. Post-translationally, predicted to be exported by the Tat system. The position of the signal peptide cleavage has not been experimentally proven.

It localises to the cell membrane. It carries out the reaction methanophenazine + H2 = dihydromethanophenazine. Part of the F420 non-reducing hydrogenase I complex that catalyzes the reduction of methanophenazine to dihydromethanophenazine. The chain is F420 non-reducing hydrogenase I small subunit from Methanosarcina mazei (strain ATCC BAA-159 / DSM 3647 / Goe1 / Go1 / JCM 11833 / OCM 88) (Methanosarcina frisia).